A 474-amino-acid polypeptide reads, in one-letter code: 3-isopropylmalate dehydratase large subunit (474 aa).

[4Fe-4S] cluster-binding residues include Cys350, Cys411, and Cys414.

Belongs to the aconitase/IPM isomerase family. LeuC type 1 subfamily. As to quaternary structure, heterodimer of LeuC and LeuD. [4Fe-4S] cluster is required as a cofactor.

The enzyme catalyses (2R,3S)-3-isopropylmalate = (2S)-2-isopropylmalate. It functions in the pathway amino-acid biosynthesis; L-leucine biosynthesis; L-leucine from 3-methyl-2-oxobutanoate: step 2/4. Functionally, catalyzes the isomerization between 2-isopropylmalate and 3-isopropylmalate, via the formation of 2-isopropylmaleate. This chain is 3-isopropylmalate dehydratase large subunit, found in Hydrogenovibrio crunogenus (strain DSM 25203 / XCL-2) (Thiomicrospira crunogena).